Reading from the N-terminus, the 339-residue chain is Phosphate acyltransferase (339 aa).

Belongs to the PlsX family. As to quaternary structure, homodimer. Probably interacts with PlsY.

It is found in the cytoplasm. It carries out the reaction a fatty acyl-[ACP] + phosphate = an acyl phosphate + holo-[ACP]. The protein operates within lipid metabolism; phospholipid metabolism. Functionally, catalyzes the reversible formation of acyl-phosphate (acyl-PO(4)) from acyl-[acyl-carrier-protein] (acyl-ACP). This enzyme utilizes acyl-ACP as fatty acyl donor, but not acyl-CoA. This chain is Phosphate acyltransferase, found in Helicobacter pylori (strain Shi470).